Consider the following 781-residue polypeptide: Poly(ADP-ribose) glycohydrolase 1 (781 aa).

3 disordered regions span residues 28-87, 102-131, and 206-232; these read AHQV…VSEN, SLDN…NNKS, and ADST…DADS. The span at 106–121 shows a compositional bias: basic and acidic residues; the sequence is VTERSEHTLDNHKSTE.

It belongs to the poly(ADP-ribose) glycohydrolase family. In terms of tissue distribution, expressed in head and tail neurons. Also detected in the central nerve cord and motor neurons.

The protein localises to the nucleus. It catalyses the reaction [(1''-&gt;2')-ADP-alpha-D-ribose](n) + H2O = [(1''-&gt;2')-ADP-alpha-D-ribose](n-1) + ADP-D-ribose. Its function is as follows. Poly(ADP-ribose) synthesized after DNA damage is only present transiently and is rapidly degraded by poly(ADP-ribose) glycohydrolase. Poly(ADP-ribose) metabolism may be required for maintenance of the normal function of neuronal cells. This Caenorhabditis elegans protein is Poly(ADP-ribose) glycohydrolase 1.